The following is a 225-amino-acid chain: Transcriptional activator protein BglJ (225 aa).

The HTH luxR-type domain occupies 146-211; it reads YINQSRTLSP…GLLEAADILL (66 aa). A DNA-binding region (H-T-H motif) is located at residues 170 to 189; sequence MTQIAEQLKRNIKTIRAHKF.

Forms a complex with RcsB; genetically both BglJ and RcsB are required to relieve bgl operon repression by H-NS and by StpA.

A crytic transcriptional activator. When its expression is induced it relieves H-NS repression of the bgl operon. Acts independently of transcription factor LeuO. In Escherichia coli (strain K12), this protein is Transcriptional activator protein BglJ (bglJ).